A 90-amino-acid polypeptide reads, in one-letter code: Large ribosomal subunit protein bL27 (90 aa).

The segment at 1 to 21 (MASKKAGGSTRNGRDSEAKRL) is disordered.

This sequence belongs to the bacterial ribosomal protein bL27 family.

In Neisseria meningitidis serogroup C (strain 053442), this protein is Large ribosomal subunit protein bL27.